Consider the following 325-residue polypeptide: MSTELDFEKPIRDLKGKIEELRTFTEEKEIDLSDEIEKLEKRLHALEENIYGNLKPWQRVQIARHGERPTTLDYIEQLFSDFLEMHGDRLYGDDEAIVAGIAKYKGQPVTVIGHQRGKDTKENIRRNFGMPHPEGYRKALRLMKQAEKFHRPVICFIDTKGAYPGKAAEERGQSEAIARNLLEMAGLKVPIVCIVIGEGGSGGALALGVGDRIHMLENSTYSVISPEGAAALLWKDASQAQRAAETMKITAPDLKELQIIDDIIPEVRGGAHRNVAEQAEAIDQVLEKSLKQLSSLTTEELLNKRYEKYKKIGEFSHVNDAISVN.

The CoA carboxyltransferase C-terminal domain maps to 38–292 (KLEKRLHALE…DQVLEKSLKQ (255 aa)).

It belongs to the AccA family. As to quaternary structure, acetyl-CoA carboxylase is a heterohexamer composed of biotin carboxyl carrier protein (AccB), biotin carboxylase (AccC) and two subunits each of ACCase subunit alpha (AccA) and ACCase subunit beta (AccD).

The protein resides in the cytoplasm. The catalysed reaction is N(6)-carboxybiotinyl-L-lysyl-[protein] + acetyl-CoA = N(6)-biotinyl-L-lysyl-[protein] + malonyl-CoA. The protein operates within lipid metabolism; malonyl-CoA biosynthesis; malonyl-CoA from acetyl-CoA: step 1/1. In terms of biological role, component of the acetyl coenzyme A carboxylase (ACC) complex. First, biotin carboxylase catalyzes the carboxylation of biotin on its carrier protein (BCCP) and then the CO(2) group is transferred by the carboxyltransferase to acetyl-CoA to form malonyl-CoA. The chain is Acetyl-coenzyme A carboxylase carboxyl transferase subunit alpha from Halalkalibacterium halodurans (strain ATCC BAA-125 / DSM 18197 / FERM 7344 / JCM 9153 / C-125) (Bacillus halodurans).